We begin with the raw amino-acid sequence, 342 residues long: Phenylalanine--tRNA ligase alpha subunit (342 aa).

Position 257 (Glu257) interacts with Mg(2+).

The protein belongs to the class-II aminoacyl-tRNA synthetase family. Phe-tRNA synthetase alpha subunit type 1 subfamily. As to quaternary structure, tetramer of two alpha and two beta subunits. Mg(2+) serves as cofactor.

It localises to the cytoplasm. It carries out the reaction tRNA(Phe) + L-phenylalanine + ATP = L-phenylalanyl-tRNA(Phe) + AMP + diphosphate + H(+). This Chlamydia trachomatis serovar D (strain ATCC VR-885 / DSM 19411 / UW-3/Cx) protein is Phenylalanine--tRNA ligase alpha subunit (pheS).